Consider the following 953-residue polypeptide: Ubiquitin carboxyl-terminal hydrolase CYLD (953 aa).

Positions 106–590 are interaction with TRIP; that stretch reads CEERFSLFKN…FEIMIGKKKG (485 aa). CAP-Gly domains lie at 153 to 198 and 253 to 286; these read LAER…VFVA and DVLPGKESLGYFVGVDMDNPIGNWDGRFDGVQLC. Disordered stretches follow at residues 313–349 and 384–410; these read PPKLAFMSRGVGDKGSFSHNKPKATGSTSDPGTRNRS and SLTEIPPDFGHASPPLQPPSMNSLSSE. Polar residues predominate over residues 337–346; it reads TGSTSDPGTR. Phosphoserine occurs at positions 384, 415, and 419. The interval 391–466 is interaction with TRAF2; that stretch reads DFGHASPPLQ…LAVSSGNSHG (76 aa). An interaction with IKBKG/NEMO region spans residues 467–681; the sequence is LEVGSLAEVK…FTSEEKDPEE (215 aa). The 44-residue stretch at 489–532 folds into the CAP-Gly 3 domain; that stretch reads GQPPGLNEVLAGLELEDECAGCTDGTFRGTRYFTCALKKALFVK. One can recognise a USP domain in the interval 589 to 947; sequence KGIQGHYNSC…DAYMCMYQSP (359 aa). The Nucleophile role is filled by Cys598. The interval 778–830 is B-box; that stretch reads LEDTPRQCRICGGLAMYECRECYDDPDISAGKIKQFCKTCNAQVHLHPKRLNH. 8 residues coordinate Zn(2+): Cys785, Cys788, Cys796, Cys799, Cys814, Cys817, His822, and His830. Residue His868 is the Proton acceptor of the active site.

The protein belongs to the peptidase C19 family. Interacts (via CAP-Gly domain) with IKBKG/NEMO (via proline-rich C-terminal region). Interacts with TRAF2 and TRIP. Interacts with PLK1, DVL1, DVL3, MAVS, TBK1, IKKE and RIGI. Interacts (via CAP-Gly domain) with microtubules. Interacts with HDAC6 and BCL3. Interacts with MAP3K7. Identified in a complex with TRAF6 and SQSTM1. Interacts with OPTN and SQSTM1. Interacts with CEP350. Interacts with RNF31; the interaction is indirect and is mediated via SPATA2. Interacts with SPATA2 (via the PUB domain); the interaction is direct and recruits CYLD to the LUBAC complex, thereby regulating TNF-alpha-induced necroptosis. In terms of processing, phosphorylated on several serine residues by IKKA and/or IKKB in response to immune stimuli. Phosphorylation requires IKBKG. Phosphorylation abolishes TRAF2 deubiquitination, interferes with the activation of Jun kinases, and strongly reduces CD40-dependent gene activation by NF-kappa-B. Ubiquitinated. Polyubiquitinated in hepatocytes treated with palmitic acid. Ubiquitination is mediated by E3 ligase TRIM47 and leads to proteasomal degradation.

The protein resides in the cytoplasm. It is found in the perinuclear region. It localises to the cytoskeleton. The protein localises to the cell membrane. Its subcellular location is the microtubule organizing center. The protein resides in the centrosome. It is found in the spindle. It localises to the cilium basal body. It carries out the reaction Thiol-dependent hydrolysis of ester, thioester, amide, peptide and isopeptide bonds formed by the C-terminal Gly of ubiquitin (a 76-residue protein attached to proteins as an intracellular targeting signal).. Its function is as follows. Deubiquitinase that specifically cleaves 'Lys-63'- and linear 'Met-1'-linked polyubiquitin chains and is involved in NF-kappa-B activation and TNF-alpha-induced necroptosis. Negatively regulates NF-kappa-B activation by deubiquitinating upstream signaling factors. Contributes to the regulation of cell survival, proliferation and differentiation via its effects on NF-kappa-B activation. Negative regulator of Wnt signaling. Inhibits HDAC6 and thereby promotes acetylation of alpha-tubulin and stabilization of microtubules. Plays a role in the regulation of microtubule dynamics, and thereby contributes to the regulation of cell proliferation, cell polarization, cell migration, and angiogenesis. Required for normal cell cycle progress and normal cytokinesis. Inhibits nuclear translocation of NF-kappa-B. Plays a role in the regulation of inflammation and the innate immune response, via its effects on NF-kappa-B activation. Dispensable for the maturation of intrathymic natural killer cells, but required for the continued survival of immature natural killer cells. Negatively regulates TNFRSF11A signaling and osteoclastogenesis. Involved in the regulation of ciliogenesis, allowing ciliary basal bodies to migrate and dock to the plasma membrane; this process does not depend on NF-kappa-B activation. Ability to remove linear ('Met-1'-linked) polyubiquitin chains regulates innate immunity and TNF-alpha-induced necroptosis: recruited to the LUBAC complex via interaction with SPATA2 and restricts linear polyubiquitin formation on target proteins. Regulates innate immunity by restricting linear polyubiquitin formation on RIPK2 in response to NOD2 stimulation. Involved in TNF-alpha-induced necroptosis by removing linear ('Met-1'-linked) polyubiquitin chains from RIPK1, thereby regulating the kinase activity of RIPK1. Negatively regulates intestinal inflammation by removing 'Lys-63' linked polyubiquitin chain of NLRP6, thereby reducing the interaction between NLRP6 and PYCARD/ASC and formation of the NLRP6 inflammasome. Does not catalyze deubiquitination of heterotypic 'Lys-63'-/'Lys-48'-linked branched ubiquitin chains. Removes 'Lys-63' linked polyubiquitin chain of MAP3K7, which inhibits phosphorylation and blocks downstream activation of the JNK-p38 kinase cascades. Also removes 'Lys-63'-linked polyubiquitin chains of MAP3K1 and MA3P3K3, which inhibit their interaction with MAP2K1 and MAP2K2. The polypeptide is Ubiquitin carboxyl-terminal hydrolase CYLD (CYLD) (Bos taurus (Bovine)).